A 162-amino-acid polypeptide reads, in one-letter code: UPF0114 protein Sden_0436 (162 aa).

Helical transmembrane passes span 15–35, 53–73, and 136–156; these read IMAPIYLGLSLILFALGIKFF, LVLITLSLIDITLVGGLLIMV, and IMWYLLIHITFVLSAFAMGYL.

The protein belongs to the UPF0114 family.

It localises to the cell membrane. This is UPF0114 protein Sden_0436 from Shewanella denitrificans (strain OS217 / ATCC BAA-1090 / DSM 15013).